Reading from the N-terminus, the 145-residue chain is Peptide methionine sulfoxide reductase MsrB (145 aa).

A MsrB domain is found at 4-127 (KEELRQRIGD…NSAALKFIPY (124 aa)). Residue Cys-116 is the Nucleophile of the active site.

The protein belongs to the MsrB Met sulfoxide reductase family.

The enzyme catalyses L-methionyl-[protein] + [thioredoxin]-disulfide + H2O = L-methionyl-(R)-S-oxide-[protein] + [thioredoxin]-dithiol. In Streptococcus equi subsp. zooepidemicus (strain H70), this protein is Peptide methionine sulfoxide reductase MsrB.